Here is a 259-residue protein sequence, read N- to C-terminus: Flap endonuclease Xni (259 aa).

Position 109 (D109) interacts with Mg(2+). One can recognise a 5'-3' exonuclease domain in the interval 165–255 (VKPQQLSDYW…FNLQDLRFTA (91 aa)). 3 residues coordinate K(+): L176, I187, and I190. The interval 189 to 194 (GIGPKA) is interaction with DNA.

This sequence belongs to the Xni family. Mg(2+) is required as a cofactor. It depends on K(+) as a cofactor.

In terms of biological role, has flap endonuclease activity. During DNA replication, flap endonucleases cleave the 5'-overhanging flap structure that is generated by displacement synthesis when DNA polymerase encounters the 5'-end of a downstream Okazaki fragment. This chain is Flap endonuclease Xni, found in Vibrio vulnificus (strain CMCP6).